Here is a 193-residue protein sequence, read N- to C-terminus: Peptidyl-tRNA hydrolase (193 aa).

A tRNA-binding site is contributed by Tyr-14. His-19 functions as the Proton acceptor in the catalytic mechanism. TRNA-binding residues include Phe-64, Asn-66, and Asn-112.

Belongs to the PTH family. As to quaternary structure, monomer.

The protein localises to the cytoplasm. It catalyses the reaction an N-acyl-L-alpha-aminoacyl-tRNA + H2O = an N-acyl-L-amino acid + a tRNA + H(+). Functionally, hydrolyzes ribosome-free peptidyl-tRNAs (with 1 or more amino acids incorporated), which drop off the ribosome during protein synthesis, or as a result of ribosome stalling. Its function is as follows. Catalyzes the release of premature peptidyl moieties from peptidyl-tRNA molecules trapped in stalled 50S ribosomal subunits, and thus maintains levels of free tRNAs and 50S ribosomes. The polypeptide is Peptidyl-tRNA hydrolase (Bartonella bacilliformis (strain ATCC 35685 / KC583 / Herrer 020/F12,63)).